Reading from the N-terminus, the 492-residue chain is NADPH:adrenodoxin oxidoreductase, mitochondrial (492 aa).

A mitochondrion-targeting transit peptide spans 1 to 32; the sequence is MAPRCWRWWPWSSWTRTRLPPSRSIQNFGQHF. 4 residues coordinate FAD: A49, E70, L78, and V114. NADP(+) contacts are provided by residues 185 to 188, 229 to 230, and E241; these read QGNV and RR. Phosphoserine is present on residues S311 and S318. Residues W399 and 406 to 408 contribute to the FAD site; that span reads GVI. G406 contacts NADP(+).

This sequence belongs to the ferredoxin--NADP reductase type 1 family. In terms of assembly, monomer. Interacts directly with FDX1. The cofactor is FAD. In terms of tissue distribution, detected in adrenal cortex and corpus luteum (at protein level).

It is found in the mitochondrion inner membrane. It carries out the reaction 2 reduced [adrenodoxin] + NADP(+) + H(+) = 2 oxidized [adrenodoxin] + NADPH. It catalyses the reaction 2 reduced [2Fe-2S]-[ferredoxin] + NADP(+) + H(+) = 2 oxidized [2Fe-2S]-[ferredoxin] + NADPH. Its pathway is steroid metabolism; cholesterol metabolism. Serves as the first electron transfer protein in all the mitochondrial P450 systems including cholesterol side chain cleavage in all steroidogenic tissues, steroid 11-beta hydroxylation in the adrenal cortex, 25-OH-vitamin D3-24 hydroxylation in the kidney, and sterol C-27 hydroxylation in the liver. Also acts as a ferredoxin--NADP(+) reductase essential for coenzyme Q biosynthesis: together with FDX2, transfers the electrons required for the hydroxylation reaction performed by COQ6. The polypeptide is NADPH:adrenodoxin oxidoreductase, mitochondrial (FDXR) (Bos taurus (Bovine)).